A 594-amino-acid polypeptide reads, in one-letter code: Cytosolic Fe-S cluster assembly factor NAR1 (594 aa).

[4Fe-4S] cluster contacts are provided by Cys-20, Cys-88, Cys-91, Cys-94, Cys-209, and Cys-264. The segment at 444–465 (RRARMSKSEDSSGASASSMAPA) is disordered. Positions 454–465 (SSGASASSMAPA) are enriched in low complexity. [4Fe-4S] cluster-binding residues include Cys-481 and Cys-485. A disordered region spans residues 492–511 (IAAPAPTSTPPAAPAPAHAA).

The protein belongs to the NARF family.

Functionally, component of the cytosolic Fe/S protein assembly machinery. Required for maturation of extramitochondrial Fe/S proteins. May play a role in the transfer of pre-assembled Fe/S clusters to target apoproteins. The polypeptide is Cytosolic Fe-S cluster assembly factor NAR1 (NAR1) (Lodderomyces elongisporus (strain ATCC 11503 / CBS 2605 / JCM 1781 / NBRC 1676 / NRRL YB-4239) (Yeast)).